A 146-amino-acid polypeptide reads, in one-letter code: Mitochondrial pyruvate carrier 3 (146 aa).

The transit peptide at 1–20 (MSASAFNFAFRRFWNSETGP) directs the protein to the mitochondrion. The next 3 membrane-spanning stretches (helical) occupy residues 23–39 (VHFW…FAGL), 55–71 (LSLL…SFVI), and 78–94 (LASV…YHLT).

Belongs to the mitochondrial pyruvate carrier (MPC) (TC 2.A.105) family. The functional 150 kDa pyruvate import complex is a heteromer of MPC1 and either MPC2 or MPC3.

The protein resides in the mitochondrion. The protein localises to the mitochondrion inner membrane. In terms of biological role, mediates the uptake of pyruvate into mitochondria. This Saccharomyces cerevisiae (strain ATCC 204508 / S288c) (Baker's yeast) protein is Mitochondrial pyruvate carrier 3.